Consider the following 478-residue polypeptide: MFPDSSYLFSMRSLSRFLIAIFGCGALLASCDSFERSVLPFDKTDELVVITVNSPDTYYENAEGSYAGLDYDLATEFAKELGMKVRFKTVPRLDKAWSLLEKHKGHFAAGMNISAKHSRHVAFGPIYQLVQPQLAYNTDYNKPKNLHQLGGRTIRIAKGVTHAEQLNKAKHEVPELKWKEMDLTPDELLARLAEGKVDYVVADSTQINLAKNFYPNLNAAFNLGDSVGRAWAFSPFAEQALLEATQKFFTRIQQDGTLTRLLDRYYGHIERLHHTDVNGILAKRRTILPELREHFYEAEELSGIDWRLIAALAYQESHWDALATSPSNVRGIMMLTEITADRMKVTDRLDARQSILAGARYFALLKDKLPTRIKEPDRTWMALAAYNQGPSHLEDARILAQKMGLSPDAWVDLKKTLPLLSQSEHFRTLRHGFARGGQAVVLAESVRIYYEILQKYEPPYSWGFPIVARKEDDSWQEF.

The first 29 residues, 1-29 (MFPDSSYLFSMRSLSRFLIAIFGCGALLA), serve as a signal peptide directing secretion. Positions 30–269 (SCDSFERSVL…RLLDRYYGHI (240 aa)) are non-LT domain. An LT domain region spans residues 271-478 (RLHHTDVNGI…RKEDDSWQEF (208 aa)). The active site involves Glu-316.

It in the N-terminal section; belongs to the bacterial solute-binding protein 3 family. The protein in the C-terminal section; belongs to the transglycosylase Slt family.

It localises to the cell outer membrane. It carries out the reaction Exolytic cleavage of the (1-&gt;4)-beta-glycosidic linkage between N-acetylmuramic acid (MurNAc) and N-acetylglucosamine (GlcNAc) residues in peptidoglycan, from either the reducing or the non-reducing ends of the peptidoglycan chains, with concomitant formation of a 1,6-anhydrobond in the MurNAc residue.. Its function is as follows. Murein-degrading enzyme that degrades murein glycan strands and insoluble, high-molecular weight murein sacculi, with the concomitant formation of a 1,6-anhydromuramoyl product. Lytic transglycosylases (LTs) play an integral role in the metabolism of the peptidoglycan (PG) sacculus. Their lytic action creates space within the PG sacculus to allow for its expansion as well as for the insertion of various structures such as secretion systems and flagella. The sequence is that of Membrane-bound lytic murein transglycosylase F from Nitrosospira multiformis (strain ATCC 25196 / NCIMB 11849 / C 71).